We begin with the raw amino-acid sequence, 355 residues long: UPF0421 protein BCE33L2478 (355 aa).

4 consecutive transmembrane segments (helical) span residues 19-39, 74-94, 109-129, and 131-151; these read IAVF…IFAV, FTFF…FTIV, TLTA…AFLI, and LATT…ILPP.

The protein belongs to the UPF0421 family.

Its subcellular location is the cell membrane. The polypeptide is UPF0421 protein BCE33L2478 (Bacillus cereus (strain ZK / E33L)).